A 141-amino-acid polypeptide reads, in one-letter code: Regulator of ribonuclease activity B (141 aa).

The segment at 112–141 is disordered; the sequence is GTYFEDPNAPDDEDDNDDLFPPEEDEPRLH. Over residues 119 to 141 the composition is skewed to acidic residues; sequence NAPDDEDDNDDLFPPEEDEPRLH.

Belongs to the RraB family. Interacts with the C-terminal region of Rne.

It localises to the cytoplasm. Its function is as follows. Globally modulates RNA abundance by binding to RNase E (Rne) and regulating its endonucleolytic activity. Can modulate Rne action in a substrate-dependent manner by altering the composition of the degradosome. This is Regulator of ribonuclease activity B from Xenorhabdus nematophila (strain ATCC 19061 / DSM 3370 / CCUG 14189 / LMG 1036 / NCIMB 9965 / AN6).